The sequence spans 54 residues: uncharacterized protein (54 aa).

Residues 1 to 54 (MSKKSTPMTKDAASRIQSSAAKSGGDVSSGSFASRAQSAAAINANNTSNSTGKK) are disordered. Over residues 28–54 (SSGSFASRAQSAAAINANNTSNSTGKK) the composition is skewed to low complexity.

This is an uncharacterized protein from Dictyostelium discoideum (Social amoeba).